The following is a 96-amino-acid chain: Aspartyl/glutamyl-tRNA(Asn/Gln) amidotransferase subunit C (96 aa).

This sequence belongs to the GatC family. As to quaternary structure, heterotrimer of A, B and C subunits.

The enzyme catalyses L-glutamyl-tRNA(Gln) + L-glutamine + ATP + H2O = L-glutaminyl-tRNA(Gln) + L-glutamate + ADP + phosphate + H(+). The catalysed reaction is L-aspartyl-tRNA(Asn) + L-glutamine + ATP + H2O = L-asparaginyl-tRNA(Asn) + L-glutamate + ADP + phosphate + 2 H(+). Allows the formation of correctly charged Asn-tRNA(Asn) or Gln-tRNA(Gln) through the transamidation of misacylated Asp-tRNA(Asn) or Glu-tRNA(Gln) in organisms which lack either or both of asparaginyl-tRNA or glutaminyl-tRNA synthetases. The reaction takes place in the presence of glutamine and ATP through an activated phospho-Asp-tRNA(Asn) or phospho-Glu-tRNA(Gln). This chain is Aspartyl/glutamyl-tRNA(Asn/Gln) amidotransferase subunit C, found in Sulfurimonas denitrificans (strain ATCC 33889 / DSM 1251) (Thiomicrospira denitrificans (strain ATCC 33889 / DSM 1251)).